We begin with the raw amino-acid sequence, 284 residues long: Protoheme IX farnesyltransferase (284 aa).

A run of 9 helical transmembrane segments spans residues 13-33 (VTVLVLATVLPGMYLGTTGYP), 35-55 (LTVISITLFGTYLMSSASFIL), 84-104 (FALLLGIVVAIVSFGILTYFI), 106-126 (LLTAVCALAALLLYVFLYTIW), 134-154 (NIVIGGISGCIGPLIGYAAMA), 163-183 (VMFLMIFLWTPAHFWALAIFL), 205-225 (VNQIFLYAIAYSLSVIGFYFV), 229-249 (MGYLFLLSAIVLTVLILGFAY), and 264-284 (FFFSILHLFLVSIAIVIDSKI).

It belongs to the UbiA prenyltransferase family. Protoheme IX farnesyltransferase subfamily.

It is found in the cell inner membrane. It carries out the reaction heme b + (2E,6E)-farnesyl diphosphate + H2O = Fe(II)-heme o + diphosphate. It participates in porphyrin-containing compound metabolism; heme O biosynthesis; heme O from protoheme: step 1/1. Functionally, converts heme B (protoheme IX) to heme O by substitution of the vinyl group on carbon 2 of heme B porphyrin ring with a hydroxyethyl farnesyl side group. This chain is Protoheme IX farnesyltransferase, found in Leptospira biflexa serovar Patoc (strain Patoc 1 / Ames).